The chain runs to 242 residues: Arginine transport ATP-binding protein ArtP (242 aa).

The region spanning 3 to 241 (IQLNGINCFY…QTEAFKNYLS (239 aa)) is the ABC transporter domain. ATP is bound at residue 35-42 (GPSGAGKS).

This sequence belongs to the ABC transporter superfamily. As to quaternary structure, the complex is composed of two ATP-binding proteins (ArtP), two transmembrane proteins (ArtM and ArtQ) and two solute-binding proteins (ArtJ and ArtI).

Its subcellular location is the cell inner membrane. The enzyme catalyses a polar amino acid(out) + ATP + H2O = a polar amino acid(in) + ADP + phosphate + H(+). It catalyses the reaction L-arginine(out) + ATP + H2O = L-arginine(in) + ADP + phosphate + H(+). Its function is as follows. Part of the ABC transporter complex ArtPIQMJ involved in arginine transport. Probably responsible for energy coupling to the transport system. This is Arginine transport ATP-binding protein ArtP (artP) from Escherichia coli O157:H7.